A 359-amino-acid chain; its full sequence is tRNA-specific 2-thiouridylase MnmA (359 aa).

Residues 9–16 (GISGGVDS) and Met35 contribute to the ATP site. The interval 95–97 (NPD) is interaction with target base in tRNA. The active-site Nucleophile is Cys100. Cys100 and Cys197 form a disulfide bridge. ATP is bound at residue Gly124. The tract at residues 147 to 149 (KDQ) is interaction with tRNA. Catalysis depends on Cys197, which acts as the Cysteine persulfide intermediate. The tract at residues 309–310 (RY) is interaction with tRNA.

Belongs to the MnmA/TRMU family.

Its subcellular location is the cytoplasm. The enzyme catalyses S-sulfanyl-L-cysteinyl-[protein] + uridine(34) in tRNA + AH2 + ATP = 2-thiouridine(34) in tRNA + L-cysteinyl-[protein] + A + AMP + diphosphate + H(+). Functionally, catalyzes the 2-thiolation of uridine at the wobble position (U34) of tRNA, leading to the formation of s(2)U34. In Francisella philomiragia subsp. philomiragia (strain ATCC 25017 / CCUG 19701 / FSC 153 / O#319-036), this protein is tRNA-specific 2-thiouridylase MnmA.